The following is a 92-amino-acid chain: Small ribosomal subunit protein uS19c (92 aa).

This sequence belongs to the universal ribosomal protein uS19 family.

The protein resides in the plastid. Its subcellular location is the chloroplast. In terms of biological role, protein S19 forms a complex with S13 that binds strongly to the 16S ribosomal RNA. This Pinus thunbergii (Japanese black pine) protein is Small ribosomal subunit protein uS19c (rps19).